Consider the following 178-residue polypeptide: Ribosome maturation factor RimM (178 aa).

Residues lysine 94 to isoleucine 174 form the PRC barrel domain.

The protein belongs to the RimM family. Binds ribosomal protein uS19.

It localises to the cytoplasm. Functionally, an accessory protein needed during the final step in the assembly of 30S ribosomal subunit, possibly for assembly of the head region. Essential for efficient processing of 16S rRNA. May be needed both before and after RbfA during the maturation of 16S rRNA. It has affinity for free ribosomal 30S subunits but not for 70S ribosomes. The protein is Ribosome maturation factor RimM of Aliarcobacter butzleri (strain RM4018) (Arcobacter butzleri).